Reading from the N-terminus, the 376-residue chain is Eugenol O-methyltransferase (376 aa).

S-adenosyl-L-methionine-binding residues include Gly-219, Asp-242, Met-263, and Lys-276. The active-site Proton acceptor is His-280.

This sequence belongs to the class I-like SAM-binding methyltransferase superfamily. Cation-independent O-methyltransferase family. COMT subfamily. Homodimer. As to expression, expressed predominantly in root hairs.

It catalyses the reaction (E)-isoeugenol + S-adenosyl-L-methionine = (E)-isomethyleugenol + S-adenosyl-L-homocysteine + H(+). In terms of biological role, O-methyltransferase. Substrate preference is eugenol &gt;&gt; orcinol monomethyl ether &gt; resorcinol monomethyl ether. The polypeptide is Eugenol O-methyltransferase (EOMT) (Sorghum bicolor (Sorghum)).